The following is a 378-amino-acid chain: Ecotin-like protein 3 (378 aa).

Disordered stretches follow at residues 191 to 216 (HRLSSSTPPLIPSAVRGSAHEAHAAP) and 238 to 378 (PQNN…KADP). A compositionally biased stretch (polar residues) spans 274 to 287 (NEPSPSRPRLSSTE). Positions 337 to 348 (RKAEDNVYEKTM) are enriched in basic and acidic residues. Residues 362 to 378 (KASASSKKSGNGSKADP) are compositionally biased toward low complexity.

This sequence belongs to the protease inhibitor I11 (ecotin) family.

The chain is Ecotin-like protein 3 from Leishmania infantum.